A 430-amino-acid chain; its full sequence is Tol-Pal system protein TolB (430 aa).

Residues 1–21 form the signal peptide; the sequence is MKQALRVAFGFLILWASVLHA.

The protein belongs to the TolB family. In terms of assembly, the Tol-Pal system is composed of five core proteins: the inner membrane proteins TolA, TolQ and TolR, the periplasmic protein TolB and the outer membrane protein Pal. They form a network linking the inner and outer membranes and the peptidoglycan layer.

It is found in the periplasm. Functionally, part of the Tol-Pal system, which plays a role in outer membrane invagination during cell division and is important for maintaining outer membrane integrity. TolB occupies a key intermediary position in the Tol-Pal system because it communicates directly with both membrane-embedded components, Pal in the outer membrane and TolA in the inner membrane. The chain is Tol-Pal system protein TolB from Shigella flexneri serotype 5b (strain 8401).